A 460-amino-acid chain; its full sequence is CWF19-like protein 2 homolog (460 aa).

3 disordered regions span residues 38-78 (GKTF…EDEK), 103-175 (KLES…TGTA), and 193-227 (RRHDDESVDDIAEMQKGKKKSDEKDKKRKEKESIK). Polar residues predominate over residues 54-68 (GSQQVRNDVMKSSDS). Positions 84-106 (KILKAEMKGDTDLVKKLKRKLES) form a coiled coil. Basic and acidic residues-rich tracts occupy residues 113-131 (EPPKSKSKEVTMMRRDREG), 139-172 (RRSDSDRHGEGSSRMRREYEKSQDLDSMVREEKT), and 205-227 (EMQKGKKKSDEKDKKRKEKESIK). The stretch at 210–231 (KKKSDEKDKKRKEKESIKEHKR) forms a coiled coil.

This sequence belongs to the CWF19 family.

This Caenorhabditis elegans protein is CWF19-like protein 2 homolog.